Reading from the N-terminus, the 346-residue chain is MDDNEEYDTKRKTRCGLHVHPDFYGVYLLRSVPKPKSFYIGSTPNPQRRLRQHNGELKNGGAYRTKKSGFRPWEMICLVYNFPSKNVALQFEHALQHPYQTRHIKSELRITHKRNSGNTLHHKLGNIRLLLGSSFFSRMGLKVLLFDPEVHSAWCINKFGVNVTDNVQVNVTRFEDYFSRDNNDESSGFSLSRQKESERIYFESSKKILFFDNQPCFICNETIDYQSESEVSFSSKLDVDAYLREGNMPLLAICYHENCRKLYHLSCLGLHFLEKGDELSNKTDSEEKLGDTVNYLTPLQGKCLSCNNFINWAKLSKMSTKLREYFLKDLLNTGATSQFIENDADD.

Residues 22–105 enclose the GIY-YIG domain; that stretch reads DFYGVYLLRS…QHPYQTRHIK (84 aa). The segment at 216–306 adopts an SLX1-type zinc-finger fold; the sequence is CFICNETIDY…TPLQGKCLSC (91 aa).

It belongs to the SLX1 family. In terms of assembly, forms a heterodimer with SLX4. The cofactor is a divalent metal cation.

It localises to the nucleus. Functionally, catalytic subunit of the SLX1-SLX4 structure-specific endonuclease that resolves DNA secondary structures generated during DNA repair and recombination. Has endonuclease activity towards branched DNA substrates, introducing single-strand cuts in duplex DNA close to junctions with ss-DNA. The polypeptide is Structure-specific endonuclease subunit SLX1 (Debaryomyces hansenii (strain ATCC 36239 / CBS 767 / BCRC 21394 / JCM 1990 / NBRC 0083 / IGC 2968) (Yeast)).